A 1099-amino-acid polypeptide reads, in one-letter code: Solute carrier family 12 member 1 (1099 aa).

Residues 1–177 (MSLNNSSSVF…EDNKAGAVKF (177 aa)) lie on the Cytoplasmic side of the membrane. Positions 20–23 (RFQV) match the RFXV motif motif. 2 positions are modified to phosphoserine: serine 60 and serine 90. Residues threonine 94, threonine 99, threonine 104, and threonine 117 each carry the phosphothreonine modification. Serine 119 bears the Phosphoserine mark. Serine 129 is modified (phosphoserine; by AMPK). At serine 147 the chain carries Phosphoserine. Positions 147 to 169 (SADRVANGEGMPGEEHAENKEED) are disordered. Residues 159–169 (GEEHAENKEED) are compositionally biased toward basic and acidic residues. Residues 178-198 (GWVKGVLVRCMLNIWGVMLFI) form a helical membrane-spanning segment. Residues 199–201 (RLS) are Extracellular-facing. Residues 202–222 (WIVGEAGIGLGVVIILLSTMV) traverse the membrane as a helical segment. Over 223 to 259 (TSITGLSTSAIATNGFVRGGGAYYLISRSLGPEFGGS) the chain is Cytoplasmic. Residues 260–280 (IGLIFAFANAVAVAMYVVGFA) form a helical membrane-spanning segment. At 281 to 302 (ETVVDLLKESDSMMVDPTNDIR) the chain is on the extracellular side. The helical transmembrane segment at 303–323 (IIGSITVVILLGISVAGMEWE) threads the bilayer. Over 324–327 (AKAQ) the chain is Cytoplasmic. A helical transmembrane segment spans residues 328–348 (VILLIILLIAIANFFIGTVIP). Topologically, residues 349–379 (SNNEKKSRGFFNYQASIFAENFGPSFTKGEG) are extracellular. The chain crosses the membrane as a helical span at residues 380-400 (FFSVFAIFFPAATGILAGANI). Residues 401–417 (SGDLEDPQDAIPRGTML) lie on the Cytoplasmic side of the membrane. A helical membrane pass occupies residues 418–438 (AIFITTVAYIGVAICVGACVV). The Extracellular portion of the chain corresponds to 439-550 (RDATGSMNDT…NNEPLRGYIL (112 aa)). N-linked (GlcNAc...) asparagine glycosylation is found at asparagine 446 and asparagine 456. Transmembrane regions (helical) follow at residues 551–571 (TFVI…APII) and 572–592 (SNFF…ASYA). Residues 593 to 609 (KSPGWRPAYGIYNMWVS) lie on the Extracellular side of the membrane. A helical membrane pass occupies residues 610–630 (LFGAVLCCAVMFVINWWAAVI). Residues 631-1099 (TYVIEFFLYI…NHKNVLTFYS (469 aa)) are Cytoplasmic-facing.

This sequence belongs to the SLC12A transporter family. As to quaternary structure, when phosphorylated, interacts with PPP3CB. Post-translationally, phosphorylated at Ser-90, Thr-99 and Thr-104 by OXSR1/OSR1 and STK39/SPAK downstream of WNK kinases (WNK1, WNK2, WNK3 or WNK4), promoting its activity. As to expression, predominant in kidney. The 3 isoforms are differentially distributed within the kidney: B almost exclusively in cortex, F almost exclusively in medulla, and A about equally distributed.

Its subcellular location is the apical cell membrane. The enzyme catalyses K(+)(out) + 2 chloride(out) + Na(+)(out) = K(+)(in) + 2 chloride(in) + Na(+)(in). With respect to regulation, activated following phosphorylation by OXSR1/OSR1 and STK39/SPAK downstream of WNK kinases (WNK1, WNK2, WNK3 or WNK4). Renal sodium, potassium and chloride ion cotransporter that mediates the transepithelial NaCl reabsorption in the thick ascending limb and plays an essential role in the urinary concentration and volume regulation. Electrically silent transporter system. This is Solute carrier family 12 member 1 (SLC12A1) from Oryctolagus cuniculus (Rabbit).